The chain runs to 287 residues: Polyamine aminopropyltransferase (287 aa).

The PABS domain occupies 5–238 (EIWYETLHAN…GIMTFAWASQ (234 aa)). Gln33 is a binding site for S-methyl-5'-thioadenosine. Residues His64 and Asp88 each contribute to the spermidine site. S-methyl-5'-thioadenosine is bound by residues Glu108 and 140–141 (DG). Catalysis depends on Asp158, which acts as the Proton acceptor. 158 to 161 (DCTD) is a binding site for spermidine. S-methyl-5'-thioadenosine is bound at residue Pro165.

It belongs to the spermidine/spermine synthase family. In terms of assembly, homodimer or homotetramer.

The protein localises to the cytoplasm. It catalyses the reaction S-adenosyl 3-(methylsulfanyl)propylamine + putrescine = S-methyl-5'-thioadenosine + spermidine + H(+). It functions in the pathway amine and polyamine biosynthesis; spermidine biosynthesis; spermidine from putrescine: step 1/1. Its function is as follows. Catalyzes the irreversible transfer of a propylamine group from the amino donor S-adenosylmethioninamine (decarboxy-AdoMet) to putrescine (1,4-diaminobutane) to yield spermidine. In Serratia proteamaculans (strain 568), this protein is Polyamine aminopropyltransferase.